A 208-amino-acid polypeptide reads, in one-letter code: Small ribosomal subunit protein uS4 (208 aa).

The S4 RNA-binding domain maps to 98–161 (QRLDNVVYRM…KTNSQILRAI (64 aa)).

It belongs to the universal ribosomal protein uS4 family. As to quaternary structure, part of the 30S ribosomal subunit. Contacts protein S5. The interaction surface between S4 and S5 is involved in control of translational fidelity.

One of the primary rRNA binding proteins, it binds directly to 16S rRNA where it nucleates assembly of the body of the 30S subunit. Functionally, with S5 and S12 plays an important role in translational accuracy. This is Small ribosomal subunit protein uS4 from Sulfurovum sp. (strain NBC37-1).